We begin with the raw amino-acid sequence, 153 residues long: Ubiquitin-conjugating enzyme E2-18 kDa (153 aa).

In terms of domain architecture, UBC core spans 2–149 (AATRRLTREL…AEEFTKKNAE (148 aa)). Catalysis depends on Cys86, which acts as the Glycyl thioester intermediate.

This sequence belongs to the ubiquitin-conjugating enzyme family.

The catalysed reaction is S-ubiquitinyl-[E1 ubiquitin-activating enzyme]-L-cysteine + [E2 ubiquitin-conjugating enzyme]-L-cysteine = [E1 ubiquitin-activating enzyme]-L-cysteine + S-ubiquitinyl-[E2 ubiquitin-conjugating enzyme]-L-cysteine.. It functions in the pathway protein modification; protein ubiquitination. In terms of biological role, catalyzes the covalent attachment of ubiquitin to other proteins. The chain is Ubiquitin-conjugating enzyme E2-18 kDa (Ubc84D) from Drosophila melanogaster (Fruit fly).